Reading from the N-terminus, the 99-residue chain is DNA-binding protein Fis (99 aa).

The segment at 1 to 25 (MFEQKISSEALTTTTSIPATGQITQ) is disordered. The segment at residues 75–94 (QTRAATMLGINRGTLRKKLK) is a DNA-binding region (H-T-H motif).

It belongs to the transcriptional regulatory Fis family. As to quaternary structure, homodimer.

Its function is as follows. Activates ribosomal RNA transcription. Plays a direct role in upstream activation of rRNA promoters. The sequence is that of DNA-binding protein Fis from Psychromonas ingrahamii (strain DSM 17664 / CCUG 51855 / 37).